Consider the following 508-residue polypeptide: BICD family-like cargo adapter 2 (508 aa).

Over residues 1-22 (MSSPDGPSFPSGPLSGGASPSG) the composition is skewed to low complexity. 3 disordered regions span residues 1–27 (MSSPDGPSFPSGPLSGGASPSGDEGFF), 132–152 (LGEQRSEQQDSGRERARALSE), and 300–351 (AHSL…TSLS). 2 coiled-coil regions span residues 64-300 (AAEL…SELA) and 353-458 (AEIL…DMQV). The segment covering 135-149 (QRSEQQDSGRERARA) has biased composition (basic and acidic residues). Positions 470 to 491 (KELSASASSSTPRRAAPRFSLR) are disordered. Low complexity predominate over residues 473–489 (SASASSSTPRRAAPRFS).

The protein belongs to the BICDR family. As to quaternary structure, interacts with RAB13.

The polypeptide is BICD family-like cargo adapter 2 (BICDL2) (Homo sapiens (Human)).